The chain runs to 201 residues: 3-isopropylmalate dehydratase small subunit (201 aa).

It belongs to the LeuD family. LeuD type 1 subfamily. As to quaternary structure, heterodimer of LeuC and LeuD.

It catalyses the reaction (2R,3S)-3-isopropylmalate = (2S)-2-isopropylmalate. The protein operates within amino-acid biosynthesis; L-leucine biosynthesis; L-leucine from 3-methyl-2-oxobutanoate: step 2/4. Catalyzes the isomerization between 2-isopropylmalate and 3-isopropylmalate, via the formation of 2-isopropylmaleate. The polypeptide is 3-isopropylmalate dehydratase small subunit (Shewanella amazonensis (strain ATCC BAA-1098 / SB2B)).